The sequence spans 191 residues: Glutathione-dependent formaldehyde-activating enzyme (191 aa).

One can recognise a CENP-V/GFA domain in the interval 22–169; it reads FAGGTLQCLC…LTELGLTPYD (148 aa). The Zn(2+) site is built by cysteine 29, cysteine 31, cysteine 50, cysteine 52, cysteine 55, cysteine 97, and cysteine 100.

Belongs to the Gfa family. Requires Zn(2+) as cofactor.

It carries out the reaction S-(hydroxymethyl)glutathione = glutathione + formaldehyde. The protein operates within one-carbon metabolism; formaldehyde degradation; formate from formaldehyde (glutathione route): step 1/3. Its function is as follows. Catalyzes the condensation of formaldehyde and glutathione to S-hydroxymethylglutathione. This is Glutathione-dependent formaldehyde-activating enzyme from Xanthomonas campestris pv. campestris (strain B100).